The sequence spans 494 residues: 3-octaprenyl-4-hydroxybenzoate carboxy-lyase (494 aa).

Asn-172 provides a ligand contact to Mn(2+). Prenylated FMN is bound by residues 175 to 177, 189 to 191, and 194 to 195; these read IYR, RWL, and RG. Glu-238 contacts Mn(2+). Catalysis depends on Asp-287, which acts as the Proton donor.

This sequence belongs to the UbiD family. Homohexamer. Prenylated FMN serves as cofactor. Mn(2+) is required as a cofactor.

It localises to the cell membrane. The catalysed reaction is a 4-hydroxy-3-(all-trans-polyprenyl)benzoate + H(+) = a 2-(all-trans-polyprenyl)phenol + CO2. Its pathway is cofactor biosynthesis; ubiquinone biosynthesis. Catalyzes the decarboxylation of 3-octaprenyl-4-hydroxy benzoate to 2-octaprenylphenol, an intermediate step in ubiquinone biosynthesis. This Escherichia coli O9:H4 (strain HS) protein is 3-octaprenyl-4-hydroxybenzoate carboxy-lyase.